A 142-amino-acid polypeptide reads, in one-letter code: MATKIDKEACRTAYNLVRDDSSAVIWVTFKYDGSTIVPGEQGAEYQDFIQQCTDDVRLFAFVRFTTGDAMSKRSKFALITWIGENVSGLQRAKTGTDKTLVKEVVQNFAKEFVISDRKELEEDFIKNELKKAGGANYDAQTE.

Alanine 2 is modified (N-acetylalanine). The ADF-H domain occupies 2–130 (ATKIDKEACR…EEDFIKNELK (129 aa)). The tract at residues 66–75 (TGDAMSKRSK) is flexible and important for F-actin binding. Residues lysine 102 and lysine 126 each carry the N6-acetyllysine modification.

Belongs to the actin-binding proteins ADF family. Coactosin subfamily. As to quaternary structure, interacts with 5-lipoxygenase (ALOX5/5LO) in a calcium-independent manner. Binds to F-actin with a stoichiometry of 1:2.

It is found in the cytoplasm. It localises to the cytoskeleton. The protein localises to the nucleus. Binds to F-actin in a calcium-independent manner. Has no direct effect on actin depolymerization. Acts as a chaperone for ALOX5 (5LO), influencing both its stability and activity in leukotrienes synthesis. The chain is Coactosin-like protein (COTL1) from Bos taurus (Bovine).